The chain runs to 898 residues: Putative disease resistance protein At1g63350 (898 aa).

The stretch at 24–88 forms a coiled coil; the sequence is VSYTHNLEKN…IESRVNDLLN (65 aa). In terms of domain architecture, NB-ARC spans 137 to 440; sequence DQASTSEVEE…CEEIIDGSEG (304 aa). 179–186 provides a ligand contact to ATP; sequence GMGGVGKT. LRR repeat units lie at residues 516–537, 538–559, 562–584, 586–608, 609–631, and 632–654; these read VVRRMSLMKNNIAHLDGRLDCM, ELTTLLLQSTHLEKISSEFFNS, KLAVLDLSGNYYLSELPNGISEL, SLQYLNLSSTGIRHLPKGLQELK, KLIHLYLERTSQLGSMVGISCLH, and NLKVLKLSGSSYAWDLDTVKELE.

The protein belongs to the disease resistance NB-LRR family.

In terms of biological role, potential disease resistance protein. This Arabidopsis thaliana (Mouse-ear cress) protein is Putative disease resistance protein At1g63350.